The sequence spans 208 residues: Ribosomal RNA small subunit methyltransferase G (208 aa).

Residues G76, L81, 127–128 (VE), and R142 contribute to the S-adenosyl-L-methionine site.

It belongs to the methyltransferase superfamily. RNA methyltransferase RsmG family.

Its subcellular location is the cytoplasm. It carries out the reaction guanosine(527) in 16S rRNA + S-adenosyl-L-methionine = N(7)-methylguanosine(527) in 16S rRNA + S-adenosyl-L-homocysteine. In terms of biological role, specifically methylates the N7 position of guanine in position 527 of 16S rRNA. The chain is Ribosomal RNA small subunit methyltransferase G from Legionella pneumophila (strain Corby).